The primary structure comprises 153 residues: uncharacterized protein (153 aa).

An N-terminal signal peptide occupies residues 1–19 (MRKYIPLVLFIFSWPVLCA). Catalysis depends on residues arginine 46, glutamate 54, and arginine 88.

It belongs to the thermonuclease family.

This is an uncharacterized protein from Escherichia coli O157:H7.